Here is a 377-residue protein sequence, read N- to C-terminus: Pseudouridylate synthase RPUSD4, mitochondrial (377 aa).

The disordered stretch occupies residues 51 to 70; that stretch reads LRAQKQQQKTKEPAPTNPVQ. Asp153 is a catalytic residue.

The protein belongs to the pseudouridine synthase RluA family. Interacts with 16S mt-rRNA, mt-tRNA(Phe) and mt-tRNA(Met). Forms a regulatory protein-RNA complex, consisting of RCC1L, NGRN, RPUSD3, RPUSD4, TRUB2, FASTKD2 and 16S mt-rRNA.

Its subcellular location is the mitochondrion matrix. It localises to the nucleus. The protein localises to the cytoplasm. It carries out the reaction uridine in 5S rRNA = pseudouridine in 5S rRNA. The enzyme catalyses a uridine in tRNA = a pseudouridine in tRNA. It catalyses the reaction a uridine in mRNA = a pseudouridine in mRNA. Its function is as follows. Catalyzes uridine to pseudouridine isomerization (pseudouridylation) of different mitochondrial RNA substrates. Acts on position 1397 in 16S mitochondrial ribosomal RNA (16S mt-rRNA). This modification is required for the assembly of 16S mt-rRNA into a functional mitochondrial ribosome. As a component of a functional protein-RNA module, consisting of RCC1L, NGRN, RPUSD3, RPUSD4, TRUB2, FASTKD2 and 16S mt-rRNA, controls 16S mt-rRNA abundance and is required for intra-mitochondrial translation. Acts on position 39 in mitochondrial tRNA(Phe). Also catalyzes pseudouridylation of mRNAs in nucleus: acts as a regulator of pre-mRNA splicing by mediating pseudouridylation of pre-mRNAs at locations associated with alternatively spliced regions. Pseudouridylation of pre-mRNAs near splice sites directly regulates mRNA splicing and mRNA 3'-end processing. The chain is Pseudouridylate synthase RPUSD4, mitochondrial from Bos taurus (Bovine).